Here is a 597-residue protein sequence, read N- to C-terminus: Translation initiation factor IF-2 (597 aa).

Low complexity-rich tracts occupy residues 57–73 (GGDA…AATA) and 81–95 (TPAA…PASD). The interval 57–96 (GGDAAPAAASAPAAATAEPEEADETPAAAAQADAEPASDL) is disordered. A tr-type G domain is found at 98–271 (HRAPVVTIMG…ELEDLRADPK (174 aa)). Residues 107 to 114 (GHVDHGKT) form a G1 region. 107 to 114 (GHVDHGKT) is a GTP binding site. The segment at 132 to 136 (GITQH) is G2. Positions 153–156 (DTPG) are G3. Residues 153-157 (DTPGH) and 207-210 (NKVD) contribute to the GTP site. The interval 207–210 (NKVD) is G4. The interval 243–245 (SAK) is G5.

The protein belongs to the TRAFAC class translation factor GTPase superfamily. Classic translation factor GTPase family. IF-2 subfamily.

Its subcellular location is the cytoplasm. Its function is as follows. One of the essential components for the initiation of protein synthesis. Protects formylmethionyl-tRNA from spontaneous hydrolysis and promotes its binding to the 30S ribosomal subunits. Also involved in the hydrolysis of GTP during the formation of the 70S ribosomal complex. The sequence is that of Translation initiation factor IF-2 from Deinococcus radiodurans (strain ATCC 13939 / DSM 20539 / JCM 16871 / CCUG 27074 / LMG 4051 / NBRC 15346 / NCIMB 9279 / VKM B-1422 / R1).